The following is a 218-amino-acid chain: 3,4-dihydroxy-2-butanone 4-phosphate synthase (218 aa).

D-ribulose 5-phosphate contacts are provided by residues 38 to 39, Asp43, 151 to 155, and Glu175; these read RE and RRGHT. Glu39 lines the Mg(2+) pocket. Residues 125 to 151 form a disordered region; sequence PHAKPEDLARPGHVFPLRARPGGVMTR. His154 contributes to the Mg(2+) binding site.

The protein belongs to the DHBP synthase family. As to quaternary structure, homodimer. Requires Mg(2+) as cofactor. Mn(2+) serves as cofactor.

It catalyses the reaction D-ribulose 5-phosphate = (2S)-2-hydroxy-3-oxobutyl phosphate + formate + H(+). It functions in the pathway cofactor biosynthesis; riboflavin biosynthesis; 2-hydroxy-3-oxobutyl phosphate from D-ribulose 5-phosphate: step 1/1. In terms of biological role, catalyzes the conversion of D-ribulose 5-phosphate to formate and 3,4-dihydroxy-2-butanone 4-phosphate. The protein is 3,4-dihydroxy-2-butanone 4-phosphate synthase of Vibrio parahaemolyticus serotype O3:K6 (strain RIMD 2210633).